A 152-amino-acid polypeptide reads, in one-letter code: Deoxyuridine 5'-triphosphate nucleotidohydrolase (152 aa).

Substrate contacts are provided by residues 71–73 (RSG), N84, 88–90 (LID), and M98.

This sequence belongs to the dUTPase family. Requires Mg(2+) as cofactor.

The enzyme catalyses dUTP + H2O = dUMP + diphosphate + H(+). The protein operates within pyrimidine metabolism; dUMP biosynthesis; dUMP from dCTP (dUTP route): step 2/2. Its function is as follows. This enzyme is involved in nucleotide metabolism: it produces dUMP, the immediate precursor of thymidine nucleotides and it decreases the intracellular concentration of dUTP so that uracil cannot be incorporated into DNA. This Coxiella burnetii (strain RSA 331 / Henzerling II) protein is Deoxyuridine 5'-triphosphate nucleotidohydrolase.